Consider the following 436-residue polypeptide: Probable ABC transporter binding protein NosD (436 aa).

Positions 1–27 are cleaved as a signal peptide; it reads MFKAQATFSRYSAAVSLLLLFSGAAQA. PbH1 repeat units follow at residues 85–113, 115–136, 137–166, 167–188, 189–210, 233–255, 293–314, and 316–354; these read APDV…FILP, AERA…FVDG, TRDV…HLFA, VSGA…YIDT, SNGN…HYMF, SRKL…LMNY, SLFN…HLTA, and SEDN…YWSD.

Belongs to the NosD family. In terms of assembly, the complex may be composed of an ATP-binding protein (NosF), a transmembrane protein (NosY) and a solute-binding protein (NosD).

Its subcellular location is the periplasm. In terms of biological role, required for the assembly of the copper chromophores of nitrous oxide reductase. Could be part of the ABC transporter complex NosDFY. The protein is Probable ABC transporter binding protein NosD of Stutzerimonas stutzeri (Pseudomonas stutzeri).